The following is a 459-amino-acid chain: Cysteine--tRNA ligase (459 aa).

Cys-28 provides a ligand contact to Zn(2+). The 'HIGH' region motif lies at 30–40; the sequence is VTIYDLCHIGH. Cys-209, His-234, and Glu-238 together coordinate Zn(2+). The 'KMSKS' region motif lies at 266–270; sequence KMSKS. Lys-269 provides a ligand contact to ATP.

The protein belongs to the class-I aminoacyl-tRNA synthetase family. Monomer. Zn(2+) is required as a cofactor.

Its subcellular location is the cytoplasm. It carries out the reaction tRNA(Cys) + L-cysteine + ATP = L-cysteinyl-tRNA(Cys) + AMP + diphosphate. The protein is Cysteine--tRNA ligase of Shewanella amazonensis (strain ATCC BAA-1098 / SB2B).